The following is a 647-amino-acid chain: 1-deoxy-D-xylulose-5-phosphate synthase (647 aa).

Residues His-72 and 113 to 115 (GHA) contribute to the thiamine diphosphate site. Residue Asp-144 coordinates Mg(2+). Thiamine diphosphate-binding positions include 145 to 146 (GA), Asn-174, Tyr-287, and Glu-370. Asn-174 contributes to the Mg(2+) binding site.

The protein belongs to the transketolase family. DXPS subfamily. In terms of assembly, homodimer. Mg(2+) is required as a cofactor. It depends on thiamine diphosphate as a cofactor.

The catalysed reaction is D-glyceraldehyde 3-phosphate + pyruvate + H(+) = 1-deoxy-D-xylulose 5-phosphate + CO2. It participates in metabolic intermediate biosynthesis; 1-deoxy-D-xylulose 5-phosphate biosynthesis; 1-deoxy-D-xylulose 5-phosphate from D-glyceraldehyde 3-phosphate and pyruvate: step 1/1. Functionally, catalyzes the acyloin condensation reaction between C atoms 2 and 3 of pyruvate and glyceraldehyde 3-phosphate to yield 1-deoxy-D-xylulose-5-phosphate (DXP). This chain is 1-deoxy-D-xylulose-5-phosphate synthase, found in Synechococcus sp. (strain WH7803).